Consider the following 407-residue polypeptide: Pleckstrin homology-like domain family A member 1 (407 aa).

Composition is skewed to basic and acidic residues over residues 1–11 (MRRTPAAERLS) and 54–63 (RSAEDGREQP). A disordered region spans residues 1–67 (MRRTPAAERL…DGREQPAHGS (67 aa)). Residues 149-184 (SGCKALKEGVLEKRSDGLLQLWKKKCCILTEEGLLL) form the PH domain. 2 disordered regions span residues 188 to 224 (KQVQ…EPPA) and 296 to 407 (QQHL…SNSA). Composition is skewed to low complexity over residues 189–204 (QVQH…QPGQ) and 297–319 (QHLV…QPQI). The tract at residues 312–348 (PQPQQPQIQPQPQPQIQPQPQPQPQPQPQPQQQPQPQ) is 15 X 2 AA repeats of P-Q. The segment covering 320–344 (QPQPQPQIQPQPQPQPQPQPQPQQQ) has biased composition (pro residues). Positions 354 to 381 (PHPHPHLYPHPHPHAHSHPHPHPHPHPH) are 11 X 2 AA repeats of P-H. Over residues 354-384 (PHPHPHLYPHPHPHAHSHPHPHPHPHPHQLQ) the composition is skewed to basic residues. Residues 385–395 (HAHQPLHSQPQ) are compositionally biased toward low complexity.

Interacts with RPL14, EIF3S7 and PABPC4.

Its subcellular location is the cytoplasm. The protein resides in the cytoplasmic vesicle. It is found in the nucleus. The protein localises to the nucleolus. Seems to be involved in regulation of apoptosis. May be involved in detachment-mediated programmed cell death. May mediate apoptosis during neuronal development. May be involved in regulation of anti-apoptotic effects of IGF1. May be involved in translational regulation. The polypeptide is Pleckstrin homology-like domain family A member 1 (Phlda1) (Rattus norvegicus (Rat)).